Consider the following 197-residue polypeptide: LexA repressor (197 aa).

A DNA-binding region (H-T-H motif) is located at residues 28–47; it reads VREIARRFRITPRGALLHLI. Active-site for autocatalytic cleavage activity residues include Ser119 and Lys156.

The protein belongs to the peptidase S24 family. As to quaternary structure, homodimer.

It carries out the reaction Hydrolysis of Ala-|-Gly bond in repressor LexA.. Functionally, represses a number of genes involved in the response to DNA damage (SOS response), including recA and lexA. In the presence of single-stranded DNA, RecA interacts with LexA causing an autocatalytic cleavage which disrupts the DNA-binding part of LexA, leading to derepression of the SOS regulon and eventually DNA repair. The chain is LexA repressor from Thermotoga sp. (strain RQ2).